Reading from the N-terminus, the 56-residue chain is Large ribosomal subunit protein bL32 (56 aa).

Basic residues predominate over residues 1-16; it reads MAVQKNKKSRSKRGMR. The tract at residues 1–36 is disordered; that stretch reads MAVQKNKKSRSKRGMRRSHDSLSTPQLSVDSTSGEL. The segment covering 21 to 34 has biased composition (polar residues); sequence SLSTPQLSVDSTSG.

This sequence belongs to the bacterial ribosomal protein bL32 family.

This Shewanella sediminis (strain HAW-EB3) protein is Large ribosomal subunit protein bL32.